The following is a 237-amino-acid chain: 2,3,4,5-tetrahydropyridine-2,6-dicarboxylate N-acetyltransferase (237 aa).

Belongs to the transferase hexapeptide repeat family. DapH subfamily.

The catalysed reaction is (S)-2,3,4,5-tetrahydrodipicolinate + acetyl-CoA + H2O = L-2-acetamido-6-oxoheptanedioate + CoA. It functions in the pathway amino-acid biosynthesis; L-lysine biosynthesis via DAP pathway; LL-2,6-diaminopimelate from (S)-tetrahydrodipicolinate (acetylase route): step 1/3. Its function is as follows. Catalyzes the transfer of an acetyl group from acetyl-CoA to tetrahydrodipicolinate. The sequence is that of 2,3,4,5-tetrahydropyridine-2,6-dicarboxylate N-acetyltransferase from Alkaliphilus metalliredigens (strain QYMF).